Here is a 919-residue protein sequence, read N- to C-terminus: Glutamate receptor ionotropic, kainate 3 (919 aa).

An N-terminal signal peptide occupies residues 1 to 31 (MTAPWRRLRSLVWEYWAGLLVCAFWIPDSRG). Residues 32–563 (MPHVIRIGGI…VFSFLNPLSP (532 aa)) are Extracellular-facing. Residues Asn70, Asn76, Asn278, Asn381, Asn415, Asn426, and Asn433 are each glycosylated (N-linked (GlcNAc...) asparagine). A disulfide bond links Cys99 and Cys350. The L-glutamate site is built by Pro518, Thr520, and Arg525. 2 N-linked (GlcNAc...) asparagine glycosylation sites follow: Asn548 and Asn551. Residues 564-584 (DIWMYVLLAYLGVSCVLFVIA) form a helical membrane-spanning segment. Residues 585–636 (RFSPYEWYDAHPCNPGSEVVENNFTLLNSFWFGMGSLMQQGSELMPKALSTR) are Cytoplasmic-facing. The chain crosses the membrane as a helical span at residues 637 to 657 (IIGGIWWFFTLIIISSYTANL). The Extracellular portion of the chain corresponds to 658-820 (AAFLTVERME…KEASALGIQK (163 aa)). L-glutamate is bound by residues Ala691, Thr692, and Glu739. The N-linked (GlcNAc...) asparagine glycan is linked to Asn752. A helical membrane pass occupies residues 821–841 (IGGIFIVLAAGLVLSVLVAVG). The Cytoplasmic portion of the chain corresponds to 842 to 919 (EFVYKLRKTA…CSTSLAPVFP (78 aa)). Position 869 is a phosphoserine (Ser869). Lys887 is covalently cross-linked (Glycyl lysine isopeptide (Lys-Gly) (interchain with G-Cter in SUMO1)).

Belongs to the glutamate-gated ion channel (TC 1.A.10.1) family. GRIK3 subfamily. Homotetramer, and heterotetramer with either GRIK4 or GRIK5. Can form functional heteromeric receptors with GRIK2. Interacts with PRKCABP. Interacts with NETO2.

It is found in the cell membrane. The protein resides in the postsynaptic cell membrane. It carries out the reaction Ca(2+)(in) = Ca(2+)(out). In terms of biological role, ionotropic glutamate receptor that functions as a cation-permeable ligand-gated ion channel, gated by L-glutamate and the glutamatergic agonist kainic acid. Binding of the excitatory neurotransmitter L-glutamate induces a conformation change, leading to the opening of the cation channel, and thereby converts the chemical signal to an electrical impulse. The receptor then desensitizes rapidly and enters a transient inactive state, characterized by the presence of bound agonist. In association with GRIK2, involved in presynaptic facilitation of glutamate release at hippocampal mossy fiber synapses. The sequence is that of Glutamate receptor ionotropic, kainate 3 (GRIK3) from Macaca fascicularis (Crab-eating macaque).